Consider the following 369-residue polypeptide: DNA replication and repair protein RecF (369 aa).

30-37 serves as a coordination point for ATP; it reads GENGQGKT.

Belongs to the RecF family.

Its subcellular location is the cytoplasm. Its function is as follows. The RecF protein is involved in DNA metabolism; it is required for DNA replication and normal SOS inducibility. RecF binds preferentially to single-stranded, linear DNA. It also seems to bind ATP. This chain is DNA replication and repair protein RecF, found in Anaeromyxobacter sp. (strain Fw109-5).